A 206-amino-acid polypeptide reads, in one-letter code: Large ribosomal subunit protein uL4 (206 aa).

The segment at 46-78 is disordered; that stretch reads GNRAQKDREQVKHTTKKPWRQKGTGRARAGMSS. A compositionally biased stretch (basic residues) spans 58–70; it reads HTTKKPWRQKGTG.

It belongs to the universal ribosomal protein uL4 family. In terms of assembly, part of the 50S ribosomal subunit.

One of the primary rRNA binding proteins, this protein initially binds near the 5'-end of the 23S rRNA. It is important during the early stages of 50S assembly. It makes multiple contacts with different domains of the 23S rRNA in the assembled 50S subunit and ribosome. Its function is as follows. Forms part of the polypeptide exit tunnel. The protein is Large ribosomal subunit protein uL4 of Burkholderia lata (strain ATCC 17760 / DSM 23089 / LMG 22485 / NCIMB 9086 / R18194 / 383).